The primary structure comprises 195 residues: Molybdenum cofactor guanylyltransferase (195 aa).

GTP-binding positions include 10 to 12 (LAG), lysine 23, asparagine 51, aspartate 69, and aspartate 99. A Mg(2+)-binding site is contributed by aspartate 99.

Belongs to the MobA family. In terms of assembly, monomer. It depends on Mg(2+) as a cofactor.

Its subcellular location is the cytoplasm. The catalysed reaction is Mo-molybdopterin + GTP + H(+) = Mo-molybdopterin guanine dinucleotide + diphosphate. Its function is as follows. Transfers a GMP moiety from GTP to Mo-molybdopterin (Mo-MPT) cofactor (Moco or molybdenum cofactor) to form Mo-molybdopterin guanine dinucleotide (Mo-MGD) cofactor. The protein is Molybdenum cofactor guanylyltransferase of Yersinia pseudotuberculosis serotype O:1b (strain IP 31758).